A 309-amino-acid polypeptide reads, in one-letter code: Porphobilinogen deaminase (309 aa).

S-(dipyrrolylmethanemethyl)cysteine is present on Cys-242.

It belongs to the HMBS family. In terms of assembly, monomer. Requires dipyrromethane as cofactor.

It catalyses the reaction 4 porphobilinogen + H2O = hydroxymethylbilane + 4 NH4(+). Its pathway is porphyrin-containing compound metabolism; protoporphyrin-IX biosynthesis; coproporphyrinogen-III from 5-aminolevulinate: step 2/4. Tetrapolymerization of the monopyrrole PBG into the hydroxymethylbilane pre-uroporphyrinogen in several discrete steps. This chain is Porphobilinogen deaminase, found in Legionella pneumophila subsp. pneumophila (strain Philadelphia 1 / ATCC 33152 / DSM 7513).